We begin with the raw amino-acid sequence, 422 residues long: UDP-N-acetylmuramoylalanine--D-glutamate ligase (422 aa).

102 to 108 serves as a coordination point for ATP; sequence GTNGKTT.

This sequence belongs to the MurCDEF family.

The protein localises to the cytoplasm. The catalysed reaction is UDP-N-acetyl-alpha-D-muramoyl-L-alanine + D-glutamate + ATP = UDP-N-acetyl-alpha-D-muramoyl-L-alanyl-D-glutamate + ADP + phosphate + H(+). It functions in the pathway cell wall biogenesis; peptidoglycan biosynthesis. Its function is as follows. Cell wall formation. Catalyzes the addition of glutamate to the nucleotide precursor UDP-N-acetylmuramoyl-L-alanine (UMA). The chain is UDP-N-acetylmuramoylalanine--D-glutamate ligase from Helicobacter pylori (strain HPAG1).